The sequence spans 416 residues: Nonsense-mediated decay protein 4 (416 aa).

Disordered stretches follow at residues 1 to 21 (MSLY…NYHD), 195 to 218 (QHPI…YNNS), and 356 to 393 (DRPS…ANGD). Residues 12–21 (EARKNSNYHD) show a composition bias toward basic and acidic residues. Basic residues predominate over residues 360–375 (KSKNKNKNKNTKKSTK).

It is found in the cytoplasm. Its function is as follows. Involved in nonsense-mediated decay of mRNAs containing premature stop codons. The polypeptide is Nonsense-mediated decay protein 4 (NMD4) (Debaryomyces hansenii (strain ATCC 36239 / CBS 767 / BCRC 21394 / JCM 1990 / NBRC 0083 / IGC 2968) (Yeast)).